We begin with the raw amino-acid sequence, 265 residues long: Mlc titration factor A (265 aa).

The Zn(2+) site is built by H111, H148, H152, and E211.

The protein belongs to the MtfA family. Monomer in solution. Interacts with Mlc. Zn(2+) serves as cofactor.

It is found in the cytoplasm. Association between Mlc and MtfA may induce structural changes that activate the peptidase activity of MtfA while inactivating the DNA-binding ability of Mlc. The aminopeptidase activity is partially inhibited by metal chelators such as EDTA and phenantroline, but not by inhibitors for serine-, aspartyl-, or cysteine-proteases. In terms of biological role, involved in the modulation of the activity of the glucose-phosphotransferase system (glucose-PTS). Interacts with the transcriptional repressor Mlc, preventing its interaction with DNA and leading to the modulation of expression of genes regulated by Mlc, including ptsG, which encodes the PTS system glucose-specific EIICB component. Functionally, shows zinc-dependent metallopeptidase activity. In vitro, can cleave several artificial substrates. The highest activity is observed for L-alanine fused to 4-nitroanilide (L-alanine-pNA). Shows lower activity towards proline-pNA and valine-pNA. This chain is Mlc titration factor A, found in Klebsiella pneumoniae subsp. pneumoniae (strain ATCC 700721 / MGH 78578).